The sequence spans 84 residues: Large ribosomal subunit protein bL27 (84 aa).

The disordered stretch occupies residues 1–21 (MAHKKGASSTRNGRDSNAQRL). Positions 7-19 (ASSTRNGRDSNAQ) are enriched in polar residues.

Belongs to the bacterial ribosomal protein bL27 family.

This Clavibacter michiganensis subsp. michiganensis (strain NCPPB 382) protein is Large ribosomal subunit protein bL27.